Here is a 306-residue protein sequence, read N- to C-terminus: Ribonuclease H2 subunit B (306 aa).

The segment at 232-285 is disordered; sequence LPDLSSPTPEPPVKKRRVSDAPVEADEDYTKYNSDNKSRKSNSKMTAAQKSLAK. The span at 259–269 shows a compositional bias: basic and acidic residues; the sequence is DYTKYNSDNKS.

The protein belongs to the RNase H2 subunit B family. The RNase H2 complex is a heterotrimer composed of the catalytic subunit RNASEH2A and the non-catalytic subunits RNASEH2B and RNASEH2C.

The protein resides in the nucleus. Its function is as follows. Non catalytic subunit of RNase H2, an endonuclease that specifically degrades the RNA of RNA:DNA hybrids. Participates in DNA replication, possibly by mediating the removal of lagging-strand Okazaki fragment RNA primers during DNA replication. Mediates the excision of single ribonucleotides from DNA:RNA duplexes. This is Ribonuclease H2 subunit B (rnaseh2b) from Xenopus laevis (African clawed frog).